A 72-amino-acid chain; its full sequence is Protein P13 (72 aa).

It localises to the virion membrane. The chain is Protein P13 (P13) from Pseudomonas phage phi6 (Bacteriophage phi-6).